Consider the following 236-residue polypeptide: MYNADVLAFGAHSDDVEIGMGGTIAKFVKQEKKVMICDLTEAELSSNGTVSLRKEEAAEAARILGADKRIQLTLPDRGLIMSDQAIRSIVTVIRICRPKAVFMPYKKDRHPDHGNAAALVEEAIFSAGIHKYKDEKSLPAHKVSKVYYYMINGFHQPDFVIDISDTIEAKKQSLNAYKSQFIPSKDSVSTPLTNGYIEIVEAREKLYGKEAGVEYAEGFFSKRMLMLDHDVLGGEQ.

Zn(2+)-binding residues include H12, D15, and H113.

Belongs to the PIGL family. Zn(2+) serves as cofactor.

The enzyme catalyses (S)-malyl N-acetyl-alpha-D-glucosaminide + H2O = (S)-malyl alpha-D-glucosaminide + acetate. Its function is as follows. Involved in bacillithiol (BSH) biosynthesis. Catalyzes the second step of the pathway, the deacetylation of N-acetylglucosaminylmalate (GlcNAc-Mal) to glucosamine malate (GlcN-Mal). The polypeptide is N-acetyl-alpha-D-glucosaminyl L-malate deacetylase 1 (Bacillus subtilis (strain 168)).